The sequence spans 500 residues: Aldehyde dehydrogenase (500 aa).

Gly-246–Gly-251 is a binding site for NAD(+). Catalysis depends on Glu-269, which acts as the Proton acceptor. The active-site Nucleophile is the Cys-303.

This sequence belongs to the aldehyde dehydrogenase family.

It carries out the reaction an aldehyde + NAD(+) + H2O = a carboxylate + NADH + 2 H(+). It participates in alcohol metabolism; ethanol degradation; acetate from ethanol: step 2/2. This chain is Aldehyde dehydrogenase (aldA), found in Agaricus bisporus (White button mushroom).